Reading from the N-terminus, the 476-residue chain is Bifunctional protein HldE (476 aa).

The interval 1 to 318 (MKPTLPNYDQ…AEAIHGSQDS (318 aa)) is ribokinase. 195 to 198 (NMLE) contacts ATP. Asp-264 is a catalytic residue. Residues 344–476 (MTNGCFDILH…IIEAIKGGRG (133 aa)) form a cytidylyltransferase region.

It in the N-terminal section; belongs to the carbohydrate kinase PfkB family. This sequence in the C-terminal section; belongs to the cytidylyltransferase family. In terms of assembly, homodimer.

It carries out the reaction D-glycero-beta-D-manno-heptose 7-phosphate + ATP = D-glycero-beta-D-manno-heptose 1,7-bisphosphate + ADP + H(+). It catalyses the reaction D-glycero-beta-D-manno-heptose 1-phosphate + ATP + H(+) = ADP-D-glycero-beta-D-manno-heptose + diphosphate. It functions in the pathway nucleotide-sugar biosynthesis; ADP-L-glycero-beta-D-manno-heptose biosynthesis; ADP-L-glycero-beta-D-manno-heptose from D-glycero-beta-D-manno-heptose 7-phosphate: step 1/4. Its pathway is nucleotide-sugar biosynthesis; ADP-L-glycero-beta-D-manno-heptose biosynthesis; ADP-L-glycero-beta-D-manno-heptose from D-glycero-beta-D-manno-heptose 7-phosphate: step 3/4. Functionally, catalyzes the phosphorylation of D-glycero-D-manno-heptose 7-phosphate at the C-1 position to selectively form D-glycero-beta-D-manno-heptose-1,7-bisphosphate. Its function is as follows. Catalyzes the ADP transfer from ATP to D-glycero-beta-D-manno-heptose 1-phosphate, yielding ADP-D-glycero-beta-D-manno-heptose. The polypeptide is Bifunctional protein HldE (Aliivibrio salmonicida (strain LFI1238) (Vibrio salmonicida (strain LFI1238))).